The primary structure comprises 407 residues: Cell division protein FtsZ (407 aa).

GTP-binding positions include 18 to 22 (GGGVN), 105 to 107 (GTG), Glu-136, Arg-140, and Asp-184. The interval 312–407 (FDGGQPPARR…EELDVPDFLK (96 aa)) is disordered. Low complexity-rich tracts occupy residues 336-348 (AAPARSSAESTRP) and 368-377 (APATASGESS). A compositionally biased stretch (pro residues) spans 381–390 (VSPPHVPPAR). Residues 396–407 (QAEELDVPDFLK) show a composition bias toward acidic residues.

The protein belongs to the FtsZ family. In terms of assembly, homodimer. Polymerizes to form a dynamic ring structure in a strictly GTP-dependent manner. Interacts directly with several other division proteins.

The protein resides in the cytoplasm. In terms of biological role, essential cell division protein that forms a contractile ring structure (Z ring) at the future cell division site. The regulation of the ring assembly controls the timing and the location of cell division. One of the functions of the FtsZ ring is to recruit other cell division proteins to the septum to produce a new cell wall between the dividing cells. Binds GTP and shows GTPase activity. This Streptomyces griseus protein is Cell division protein FtsZ.